The primary structure comprises 171 residues: S-ribosylhomocysteine lyase (171 aa).

Residues His54, His58, and Cys128 each coordinate Fe cation.

Belongs to the LuxS family. Homodimer. Fe cation serves as cofactor.

The enzyme catalyses S-(5-deoxy-D-ribos-5-yl)-L-homocysteine = (S)-4,5-dihydroxypentane-2,3-dione + L-homocysteine. Its function is as follows. Involved in the synthesis of autoinducer 2 (AI-2) which is secreted by bacteria and is used to communicate both the cell density and the metabolic potential of the environment. The regulation of gene expression in response to changes in cell density is called quorum sensing. Catalyzes the transformation of S-ribosylhomocysteine (RHC) to homocysteine (HC) and 4,5-dihydroxy-2,3-pentadione (DPD). The chain is S-ribosylhomocysteine lyase from Photorhabdus laumondii subsp. laumondii (strain DSM 15139 / CIP 105565 / TT01) (Photorhabdus luminescens subsp. laumondii).